The primary structure comprises 262 residues: LysM domain-containing protein ARB_03438 (262 aa).

A signal peptide spans 1 to 22 (MVSIPLILGAIILLGTRKAATA). Positions 31 to 75 (FAVTAATDDTCQSLGAQWGIGMAQFLKWNPGVNCNALVAGKTYCL) constitute a LysM 1 domain. Residues 85 to 112 (TASLTPSPQVPTTSRATQTMTSKASTGT) form a disordered region. Residues 86-112 (ASLTPSPQVPTTSRATQTMTSKASTGT) are compositionally biased toward polar residues. The 48-residue stretch at 132 to 179 (FYHPVSPGDTCQSIVDRYKAFTLDQFYTWNPSVGKNCESLWLGYYVCT) folds into the LysM 2 domain. A disordered region spans residues 184–240 (GPNSPSQQPPSQQPPSQQSPSQQSPSQQSPSQQPPSQQPPSQQPPSQQSNTSQQTQP). Positions 197 to 214 (PPSQQSPSQQSPSQQSPS) are enriched in low complexity. The segment covering 215 to 226 (QQPPSQQPPSQQ) has biased composition (pro residues). The segment covering 227-240 (PPSQQSNTSQQTQP) has biased composition (low complexity). Asn-233 is a glycosylation site (N-linked (GlcNAc...) asparagine).

The protein localises to the secreted. Functionally, might have a role in sequestration of chitin oligosaccharides (breakdown products of fungal cell walls that are released during invasion and act as triggers of host immunity) to dampen host defense. This Arthroderma benhamiae (strain ATCC MYA-4681 / CBS 112371) (Trichophyton mentagrophytes) protein is LysM domain-containing protein ARB_03438.